The following is a 138-amino-acid chain: Nucleoside diphosphate kinase (138 aa).

ATP is bound by residues K12, Y60, R88, T94, R105, and N115. H118 serves as the catalytic Pros-phosphohistidine intermediate.

This sequence belongs to the NDK family. As to quaternary structure, homotetramer. The cofactor is Mg(2+).

Its subcellular location is the cytoplasm. The enzyme catalyses a 2'-deoxyribonucleoside 5'-diphosphate + ATP = a 2'-deoxyribonucleoside 5'-triphosphate + ADP. The catalysed reaction is a ribonucleoside 5'-diphosphate + ATP = a ribonucleoside 5'-triphosphate + ADP. In terms of biological role, major role in the synthesis of nucleoside triphosphates other than ATP. The ATP gamma phosphate is transferred to the NDP beta phosphate via a ping-pong mechanism, using a phosphorylated active-site intermediate. The chain is Nucleoside diphosphate kinase from Cutibacterium acnes (strain DSM 16379 / KPA171202) (Propionibacterium acnes).